The primary structure comprises 660 residues: MPKCPIPIRISFFSYFLKESRILSSNPVNFSIHLRFSSSVSVSPNPSMEVVENPLEAPISEKMFKSAPKMGSFKLGDSTLSSMIESYANSGDFDSVEKLLSRIRLENRVIIERSFIVVFRAYGKAHLPDKAVDLFHRMVDEFRCKRSVKSFNSVLNVIINEGLYHRGLEFYDYVVNSNMNMNISPNGLSFNLVIKALCKLRFVDRAIEVFRGMPERKCLPDGYTYCTLMDGLCKEERIDEAVLLLDEMQSEGCSPSPVIYNVLIDGLCKKGDLTRVTKLVDNMFLKGCVPNEVTYNTLIHGLCLKGKLDKAVSLLERMVSSKCIPNDVTYGTLINGLVKQRRATDAVRLLSSMEERGYHLNQHIYSVLISGLFKEGKAEEAMSLWRKMAEKGCKPNIVVYSVLVDGLCREGKPNEAKEILNRMIASGCLPNAYTYSSLMKGFFKTGLCEEAVQVWKEMDKTGCSRNKFCYSVLIDGLCGVGRVKEAMMVWSKMLTIGIKPDTVAYSSIIKGLCGIGSMDAALKLYHEMLCQEEPKSQPDVVTYNILLDGLCMQKDISRAVDLLNSMLDRGCDPDVITCNTFLNTLSEKSNSCDKGRSFLEELVVRLLKRQRVSGACTIVEVMLGKYLAPKTSTWAMIVREICKPKKINAAIDKCWRNLCT.

15 PPR repeats span residues 76–110 (GDST…NRVI), 111–141 (IERS…MVDE), 147–181 (SVKS…NMNM), 186–220 (NGLS…KCLP), 221–255 (DGYT…GCSP), 256–290 (SPVI…GCVP), 291–325 (NEVT…KCIP), 326–360 (NDVT…GYHL), 361–395 (NQHI…GCKP), 396–430 (NIVV…GCLP), 431–465 (NAYT…GCSR), 466–500 (NKFC…GIKP), 501–535 (DTVA…EEPK), 539–573 (DVVT…GCDP), and 574–609 (DVIT…LLKR).

This sequence belongs to the PPR family. P subfamily.

In terms of biological role, may play a role in embryogenesis. The protein is Pentatricopeptide repeat-containing protein At4g20090 (EMB1025) of Arabidopsis thaliana (Mouse-ear cress).